A 419-amino-acid chain; its full sequence is UPF0229 protein Tbd_1233 (419 aa).

The interval glycine 85 to methionine 108 is disordered. A compositionally biased stretch (gly residues) spans glycine 93 to aspartate 104.

This sequence belongs to the UPF0229 family.

The chain is UPF0229 protein Tbd_1233 from Thiobacillus denitrificans (strain ATCC 25259 / T1).